The sequence spans 1014 residues: Regulator of telomere elongation helicase 1 homolog (1014 aa).

A Helicase ATP-binding domain is found at 7-308 (RGVDVDFPYD…NSADKQFDPE (302 aa)). Position 42 to 49 (42 to 49 (SPTGTGKT)) interacts with ATP. Residues 70–85 (GGGGGGGGGGGGGGGS) show a composition bias toward gly residues. Residues 70–106 (GGGGGGGGGGGGGGGSQQPPYGSQPSGSQHSGGSASQ) are disordered. Residues 86–106 (QQPPYGSQPSGSQHSGGSASQ) show a composition bias toward low complexity. [4Fe-4S] cluster is bound by residues Cys149, Cys170, Cys175, and Cys211. Residues 255–258 (DEAH) carry the DEAH box motif. A disordered region spans residues 906–930 (SSKKSNITHAPGNSGAIHEKSGGQE).

The protein belongs to the helicase family. RAD3/XPD subfamily.

The protein resides in the nucleus. The enzyme catalyses ATP + H2O = ADP + phosphate + H(+). Its function is as follows. A probable ATP-dependent DNA helicase implicated in DNA replication, DNA repair and the maintenance of genomic stability. Acts as an anti-recombinase to counteract toxic recombination and limit crossover during meiosis. Regulates meiotic recombination and crossover homeostasis by physically dissociating strand invasion events and thereby promotes noncrossover repair by meiotic synthesis dependent strand annealing (SDSA) as well as disassembly of D loop recombination intermediates. The chain is Regulator of telomere elongation helicase 1 homolog from Oryza sativa subsp. japonica (Rice).